A 962-amino-acid polypeptide reads, in one-letter code: Protein lin-36 (962 aa).

2 disordered regions span residues 1 to 53 (MSEE…ETEG) and 74 to 99 (TSSG…PREE). Residues 23–40 (DSHVTVHSVEQDSQHSGE) show a composition bias toward basic and acidic residues. Residues 74 to 95 (TSSGEVLDESQVTPTKQASSSQ) are compositionally biased toward polar residues. A THAP-type zinc finger spans residues 161-249 (LTHKPCTVCN…IEAFGVPVAI (89 aa)). Basic and acidic residues-rich tracts occupy residues 452-472 (KAEE…KHAE) and 534-570 (SHEE…DEQF). Disordered regions lie at residues 452-575 (KAEE…KMVQ), 612-676 (IAAT…PEER), 744-788 (QEKG…SASS), and 932-962 (DPKW…DSQQ). Positions 626–637 (SSEQTPEPTTSQ) are enriched in low complexity. The segment covering 647-658 (KTKESAVQKVEK) has biased composition (basic and acidic residues). The segment covering 939–951 (QQQQQQQQQQQEQ) has biased composition (low complexity). The segment covering 952-962 (FPGQGSSDSQQ) has biased composition (polar residues).

In terms of tissue distribution, expressed in vulval precursor P(3-8).p cells and their descendants, neurons of the head, tail and ventral cord, hypodermal and intestinal cells and germline cells.

It localises to the nucleus. Functionally, required to negatively regulate vulval development. Antagonizes Ras-mediated vulval induction. Acts cell autonomously. The protein is Protein lin-36 (lin-36) of Caenorhabditis elegans.